The following is a 349-amino-acid chain: 2-oxoglutarate and iron-dependent oxygenase domain-containing protein 2 (349 aa).

In terms of domain architecture, Fe2OG dioxygenase spans 211–305 (DSHRAFVVKY…RWNLILWMRA (95 aa)). Residues His-231, Asp-233, and His-286 each contribute to the Fe cation site. Arg-296 is a 2-oxoglutarate binding site.

It belongs to the OGFOD2 family. Fe(2+) serves as cofactor. It depends on L-ascorbate as a cofactor.

In Xenopus tropicalis (Western clawed frog), this protein is 2-oxoglutarate and iron-dependent oxygenase domain-containing protein 2 (ogfod2).